The following is a 521-amino-acid chain: DEAD-box ATP-dependent RNA helicase 1 (521 aa).

The tract at residues 1–20 is disordered; that stretch reads MVVAMATKEEEGGPSSRVPH. The Q motif motif lies at 36 to 65; the sequence is CPVAHLPRLDPRLVKPLQRMGIESFFPVQV. The Helicase ATP-binding domain occupies 72–302; it reads IGPGAFERDI…QLELQHPLLL (231 aa). 85-92 contacts ATP; that stretch reads SPTGSGKT. The DEAD box signature appears at 213-216; it reads DETD. Residues 330 to 480 enclose the Helicase C-terminal domain; the sequence is SLIVLLQELR…SLPEESVETL (151 aa). Residues 495–507 show a composition bias toward basic and acidic residues; sequence LESEATKKSKSGD. The interval 495–521 is disordered; sequence LESEATKKSKSGDKAPNASKRKRTINT.

It belongs to the DEAD box helicase family. DDX51/DBP6 subfamily.

It carries out the reaction ATP + H2O = ADP + phosphate + H(+). This Oryza sativa subsp. japonica (Rice) protein is DEAD-box ATP-dependent RNA helicase 1.